An 874-amino-acid polypeptide reads, in one-letter code: Alanine--tRNA ligase (874 aa).

Zn(2+) contacts are provided by His-562, His-566, Cys-665, and His-669.

Belongs to the class-II aminoacyl-tRNA synthetase family. The cofactor is Zn(2+).

It localises to the cytoplasm. It catalyses the reaction tRNA(Ala) + L-alanine + ATP = L-alanyl-tRNA(Ala) + AMP + diphosphate. Its function is as follows. Catalyzes the attachment of alanine to tRNA(Ala) in a two-step reaction: alanine is first activated by ATP to form Ala-AMP and then transferred to the acceptor end of tRNA(Ala). Also edits incorrectly charged Ser-tRNA(Ala) and Gly-tRNA(Ala) via its editing domain. The protein is Alanine--tRNA ligase of Pseudomonas paraeruginosa (strain DSM 24068 / PA7) (Pseudomonas aeruginosa (strain PA7)).